The chain runs to 605 residues: Elongation factor 4 (605 aa).

The 184-residue stretch at 9–192 (GMIRNFCIIA…AIVARVPAPA (184 aa)) folds into the tr-type G domain. Residues 21 to 26 (DHGKST) and 139 to 142 (NKID) contribute to the GTP site.

This sequence belongs to the TRAFAC class translation factor GTPase superfamily. Classic translation factor GTPase family. LepA subfamily.

The protein resides in the cell inner membrane. The catalysed reaction is GTP + H2O = GDP + phosphate + H(+). Functionally, required for accurate and efficient protein synthesis under certain stress conditions. May act as a fidelity factor of the translation reaction, by catalyzing a one-codon backward translocation of tRNAs on improperly translocated ribosomes. Back-translocation proceeds from a post-translocation (POST) complex to a pre-translocation (PRE) complex, thus giving elongation factor G a second chance to translocate the tRNAs correctly. Binds to ribosomes in a GTP-dependent manner. This is Elongation factor 4 from Chlorobaculum tepidum (strain ATCC 49652 / DSM 12025 / NBRC 103806 / TLS) (Chlorobium tepidum).